We begin with the raw amino-acid sequence, 408 residues long: Glutamate N-acetyltransferase (408 aa).

6 residues coordinate substrate: threonine 150, lysine 176, threonine 189, glutamate 271, asparagine 403, and threonine 408. Threonine 189 (nucleophile) is an active-site residue.

It belongs to the ArgJ family. As to quaternary structure, heterotetramer of two alpha and two beta chains.

It localises to the cytoplasm. The enzyme catalyses N(2)-acetyl-L-ornithine + L-glutamate = N-acetyl-L-glutamate + L-ornithine. Its pathway is amino-acid biosynthesis; L-arginine biosynthesis; L-ornithine and N-acetyl-L-glutamate from L-glutamate and N(2)-acetyl-L-ornithine (cyclic): step 1/1. Catalyzes the transfer of the acetyl group from N(2)-acetylornithine to glutamate, forming N-acetylglutamate and L-ornithine. In Methanococcus maripaludis (strain C5 / ATCC BAA-1333), this protein is Glutamate N-acetyltransferase.